The chain runs to 114 residues: Cystatin Pr17a (114 aa).

Positions 1–18 (MSCLKIITLFLFLAAVIA) are cleaved as a signal peptide. One can recognise a Cystatin domain in the interval 31–109 (GAPEQINPND…QAWLKKTSVK (79 aa)). The cysteines at positions 93 and 113 are disulfide-linked.

The protein belongs to the cystatin family. In terms of tissue distribution, expressed by the venom gland (posterior main gland) (at protein level).

Its subcellular location is the secreted. This chain is Cystatin Pr17a, found in Platymeris rhadamanthus (Red spot assassin bug).